A 119-amino-acid chain; its full sequence is MARVKTGKTAHKRHKKVLKLAKGFRGARSKLFRPANQFVMKSLKYAYIGRKLRKRDFRKLWITRINAATRANGLSYSKFMNGLKLAGIDMNRKVLSEMAIYDKEGFAQLVETAKQKLNA.

This sequence belongs to the bacterial ribosomal protein bL20 family.

Functionally, binds directly to 23S ribosomal RNA and is necessary for the in vitro assembly process of the 50S ribosomal subunit. It is not involved in the protein synthesizing functions of that subunit. This Alkaliphilus oremlandii (strain OhILAs) (Clostridium oremlandii (strain OhILAs)) protein is Large ribosomal subunit protein bL20.